A 141-amino-acid polypeptide reads, in one-letter code: Nucleoside diphosphate kinase (141 aa).

Residues Lys-11, Phe-59, Arg-87, Thr-93, Arg-104, and Asn-114 each coordinate ATP. His-117 acts as the Pros-phosphohistidine intermediate in catalysis.

It belongs to the NDK family. As to quaternary structure, homotetramer. It depends on Mg(2+) as a cofactor.

It localises to the cytoplasm. The catalysed reaction is a 2'-deoxyribonucleoside 5'-diphosphate + ATP = a 2'-deoxyribonucleoside 5'-triphosphate + ADP. It catalyses the reaction a ribonucleoside 5'-diphosphate + ATP = a ribonucleoside 5'-triphosphate + ADP. Functionally, major role in the synthesis of nucleoside triphosphates other than ATP. The ATP gamma phosphate is transferred to the NDP beta phosphate via a ping-pong mechanism, using a phosphorylated active-site intermediate. This Teredinibacter turnerae (strain ATCC 39867 / T7901) protein is Nucleoside diphosphate kinase.